The primary structure comprises 298 residues: Elongation factor Ts (298 aa).

The interval 79-82 is involved in Mg(2+) ion dislocation from EF-Tu; sequence TDFV.

Belongs to the EF-Ts family.

The protein resides in the cytoplasm. Its function is as follows. Associates with the EF-Tu.GDP complex and induces the exchange of GDP to GTP. It remains bound to the aminoacyl-tRNA.EF-Tu.GTP complex up to the GTP hydrolysis stage on the ribosome. This is Elongation factor Ts from Cereibacter sphaeroides (strain ATCC 17029 / ATH 2.4.9) (Rhodobacter sphaeroides).